Consider the following 655-residue polypeptide: uncharacterized protein (655 aa).

A helical membrane pass occupies residues 5–25; sequence IIIIIFIVINFINIIISSITF. 2 disordered regions span residues 337–363 and 484–525; these read NSDY…NNNN and DKIG…SDNS. A compositionally biased stretch (low complexity) spans 515–524; that stretch reads DNNSIGSSDN. Residues 588–608 traverse the membrane as a helical segment; sequence ILAVTISAIGIICVALLLTVV.

It localises to the membrane. This is an uncharacterized protein from Dictyostelium discoideum (Social amoeba).